A 464-amino-acid chain; its full sequence is GDNF family receptor alpha-2 (464 aa).

The signal sequence occupies residues 1–21 (MILANAFCLFFFLDETLRSLA). 14 disulfide bridges follow: Cys-40-Cys-93, Cys-47-Cys-53, Cys-63-Cys-78, Cys-95-Cys-105, Cys-161-Cys-222, Cys-168-Cys-174, Cys-185-Cys-200, Cys-195-Cys-241, Cys-224-Cys-229, Cys-251-Cys-323, Cys-258-Cys-264, Cys-275-Cys-293, Cys-285-Cys-347, and Cys-325-Cys-335. The N-linked (GlcNAc...) asparagine glycan is linked to Asn-52. Asn-357 is a glycosylation site (N-linked (GlcNAc...) asparagine). Residues 360–374 (DVNLSPKSPPFQATQ) show a composition bias toward polar residues. The segment at 360 to 392 (DVNLSPKSPPFQATQAPRVDKTPSLPDDLSDST) is disordered. Residues 381 to 392 (TPSLPDDLSDST) are compositionally biased toward low complexity. An N-linked (GlcNAc...) asparagine glycan is attached at Asn-413. Residue Asn-440 is the site of GPI-anchor amidated asparagine attachment. The propeptide at 441–464 (SGPRRTRPSAALTAASFLMLKLAL) is removed in mature form.

It belongs to the GDNFR family. Interacts with NRTN ligand and RET: forms a 2:2:2 ternary complex composed of NRTN ligand, GFRA2 and RET receptor. Also forms a 4:4:4 tetrameric complex composed of 4 copies of NRTN ligand, GFRA2 and RET receptor, which prevents endocytosis of RET. Interacts with SORL1.

Its subcellular location is the cell membrane. Receptor for neurturin (NRTN), a growth factor that supports the survival of sympathetic neurons. NRTN-binding leads to autophosphorylation and activation of the RET receptor. Also able to mediate GDNF signaling through the RET tyrosine kinase receptor. This Bos taurus (Bovine) protein is GDNF family receptor alpha-2 (GFRA2).